The sequence spans 485 residues: Protein nucleotidyltransferase YdiU (485 aa).

ATP-binding residues include glycine 90, glycine 92, arginine 93, lysine 113, aspartate 125, glycine 126, arginine 176, and arginine 183. Residue aspartate 252 is the Proton acceptor of the active site. Residues asparagine 253 and aspartate 262 each contribute to the Mg(2+) site. Residue aspartate 262 coordinates ATP.

This sequence belongs to the SELO family. The cofactor is Mg(2+). Mn(2+) is required as a cofactor.

The catalysed reaction is L-seryl-[protein] + ATP = 3-O-(5'-adenylyl)-L-seryl-[protein] + diphosphate. It carries out the reaction L-threonyl-[protein] + ATP = 3-O-(5'-adenylyl)-L-threonyl-[protein] + diphosphate. The enzyme catalyses L-tyrosyl-[protein] + ATP = O-(5'-adenylyl)-L-tyrosyl-[protein] + diphosphate. It catalyses the reaction L-histidyl-[protein] + UTP = N(tele)-(5'-uridylyl)-L-histidyl-[protein] + diphosphate. The catalysed reaction is L-seryl-[protein] + UTP = O-(5'-uridylyl)-L-seryl-[protein] + diphosphate. It carries out the reaction L-tyrosyl-[protein] + UTP = O-(5'-uridylyl)-L-tyrosyl-[protein] + diphosphate. Functionally, nucleotidyltransferase involved in the post-translational modification of proteins. It can catalyze the addition of adenosine monophosphate (AMP) or uridine monophosphate (UMP) to a protein, resulting in modifications known as AMPylation and UMPylation. This Vibrio atlanticus (strain LGP32) (Vibrio splendidus (strain Mel32)) protein is Protein nucleotidyltransferase YdiU.